A 128-amino-acid polypeptide reads, in one-letter code: Large ribosomal subunit protein eL22 (128 aa).

Residue T62 is modified to Phosphothreonine. Phosphoserine is present on S66. N6-succinyllysine is present on K69.

This sequence belongs to the eukaryotic ribosomal protein eL22 family. Component of the large ribosomal subunit.

The protein resides in the cytoplasm. Its function is as follows. Component of the large ribosomal subunit. The ribosome is a large ribonucleoprotein complex responsible for the synthesis of proteins in the cell. In Sus scrofa (Pig), this protein is Large ribosomal subunit protein eL22 (RPL22).